Consider the following 102-residue polypeptide: Small ribosomal subunit protein uS10 (102 aa).

It belongs to the universal ribosomal protein uS10 family. Part of the 30S ribosomal subunit.

Its function is as follows. Involved in the binding of tRNA to the ribosomes. This is Small ribosomal subunit protein uS10 from Rhodopseudomonas palustris (strain BisB18).